The chain runs to 277 residues: Putative envelope-preserving system protein Rv2742c (277 aa).

Basic and acidic residues predominate over residues 31–54; it reads RDENRQRHAQVDVQRRRDQPERGQ. Disordered regions lie at residues 31–70, 113–133, and 180–210; these read RDEN…PDGR, QGSP…RLGR, and RQGS…HTAD. Residues 116 to 133 are compositionally biased toward basic residues; it reads PRRRERRRGQTAHQRLGR.

Interacts with Rv2743c.

Its function is as follows. Involved in preservation of envelope integrity and tolerance to surface stress. Reverses the inhibitory effect of PspA on ClgR activity. Facilitates intracellular growth of M.tuberculosis. The sequence is that of Putative envelope-preserving system protein Rv2742c from Mycobacterium tuberculosis (strain ATCC 25618 / H37Rv).